The primary structure comprises 329 residues: Acetoacetyl CoA synthase NphT7 (329 aa).

Active-site residues include Cys-115, His-256, and Asn-286.

It belongs to the thiolase-like superfamily. FabH family. In terms of assembly, homodimer.

It is found in the cytoplasm. It carries out the reaction malonyl-CoA + acetyl-CoA + H(+) = acetoacetyl-CoA + CO2 + CoA. It participates in metabolic intermediate biosynthesis; (R)-mevalonate biosynthesis. Its function is as follows. Catalyzes the condensation of acetyl-CoA and malonyl-CoA to form acetoacetyl-CoA and CoA. Does not accept malonyl-[acyl-carrier-protein] as a substrate. Can also convert malonyl-CoA into acetyl-CoA via decarboxylation of malonyl-CoA. This is Acetoacetyl CoA synthase NphT7 (nphT7) from Streptomyces sp. (strain CL190).